Reading from the N-terminus, the 724-residue chain is Phosphoribosylformylglycinamidine synthase subunit PurL (724 aa).

H46 is an active-site residue. The ATP site is built by Y49 and K88. Residue E90 coordinates Mg(2+). Substrate contacts are provided by residues 91–94 and R113; that span reads SHNH. Catalysis depends on H92, which acts as the Proton acceptor. D114 contributes to the Mg(2+) binding site. Q237 lines the substrate pocket. D265 contributes to the Mg(2+) binding site. 309–311 serves as a coordination point for substrate; the sequence is ESQ. ATP is bound by residues D489 and G526. A Mg(2+)-binding site is contributed by N527. Residue S529 coordinates substrate.

It belongs to the FGAMS family. Monomer. Part of the FGAM synthase complex composed of 1 PurL, 1 PurQ and 2 PurS subunits.

Its subcellular location is the cytoplasm. The enzyme catalyses N(2)-formyl-N(1)-(5-phospho-beta-D-ribosyl)glycinamide + L-glutamine + ATP + H2O = 2-formamido-N(1)-(5-O-phospho-beta-D-ribosyl)acetamidine + L-glutamate + ADP + phosphate + H(+). The protein operates within purine metabolism; IMP biosynthesis via de novo pathway; 5-amino-1-(5-phospho-D-ribosyl)imidazole from N(2)-formyl-N(1)-(5-phospho-D-ribosyl)glycinamide: step 1/2. Part of the phosphoribosylformylglycinamidine synthase complex involved in the purines biosynthetic pathway. Catalyzes the ATP-dependent conversion of formylglycinamide ribonucleotide (FGAR) and glutamine to yield formylglycinamidine ribonucleotide (FGAM) and glutamate. The FGAM synthase complex is composed of three subunits. PurQ produces an ammonia molecule by converting glutamine to glutamate. PurL transfers the ammonia molecule to FGAR to form FGAM in an ATP-dependent manner. PurS interacts with PurQ and PurL and is thought to assist in the transfer of the ammonia molecule from PurQ to PurL. This Granulibacter bethesdensis (strain ATCC BAA-1260 / CGDNIH1) protein is Phosphoribosylformylglycinamidine synthase subunit PurL.